The sequence spans 193 residues: Corrinoid adenosyltransferase (193 aa).

ATP-binding positions include 10–18, Lys-28, 137–142, and Asn-163; these read TRTGDDGTT and RRAERS.

It belongs to the Cob(I)alamin adenosyltransferase family.

The protein localises to the cytoplasm. It catalyses the reaction 2 cob(II)yrinate a,c diamide + reduced [electron-transfer flavoprotein] + 2 ATP = 2 adenosylcob(III)yrinate a,c-diamide + 2 triphosphate + oxidized [electron-transfer flavoprotein] + 3 H(+). The enzyme catalyses 2 cob(II)alamin + reduced [electron-transfer flavoprotein] + 2 ATP = 2 adenosylcob(III)alamin + 2 triphosphate + oxidized [electron-transfer flavoprotein] + 3 H(+). Its pathway is cofactor biosynthesis; adenosylcobalamin biosynthesis; adenosylcobalamin from cob(II)yrinate a,c-diamide: step 2/7. The sequence is that of Corrinoid adenosyltransferase from Mycobacterium bovis (strain ATCC BAA-935 / AF2122/97).